The sequence spans 383 residues: Aquaporin-5 (383 aa).

The Cytoplasmic segment spans residues 1–46 (MSVTTLNGQPTLNISGPGQTALSRLDPLKKVFTKFFSSIPQKVRGH). A helical transmembrane segment spans residues 47 to 67 (VVAVIGELIGTTAFLFIAFSA). The Extracellular portion of the chain corresponds to 68-93 (AEVALASANDNKGDKVSYETKSISTT). A helical membrane pass occupies residues 94–114 (QILFIAFGAGISLVVNAWTFF). A topological domain (cytoplasmic) is located at residue Arg115. A helical membrane pass occupies residues 116–136 (ISGGLFDPAVSIALFFVGAID). Residues 122 to 124 (DPA) carry the NPA 1 motif. Topologically, residues 137-140 (LTRC) are extracellular. The helical transmembrane segment at 141-161 (VLLCIAQCLGAIAASAMAYGL) threads the bilayer. Residues 162-180 (YHGGLHTATTLKPGMSPAQ) are Cytoplasmic-facing. Residues 181–201 (GVIVEMILTCQLCFTVLMLAA) form a helical membrane-spanning segment. The Extracellular portion of the chain corresponds to 202–207 (EKHEAT). The helical transmembrane segment at 208-228 (FLAPLGIGLSVFIGELAGVFW) threads the bilayer. The Cytoplasmic portion of the chain corresponds to 229-252 (TGGSMNPARSLGPAVVTLSFPSYH). Positions 234 to 236 (NPA) match the NPA 2 motif. The helical transmembrane segment at 253–273 (WIYWVGPIAGAGLASIIYKLI) threads the bilayer. The Extracellular portion of the chain corresponds to 274-383 (KALEYETAQL…DGFFGEMYAD (110 aa)). Over residues 332–349 (ARKSSSLVPTKSTKSGNS) the composition is skewed to polar residues. Positions 332 to 383 (ARKSSSLVPTKSTKSGNSEVKKTETVVEEPAKTQPKPAPAADDGFFGEMYAD) are disordered. A compositionally biased stretch (basic and acidic residues) spans 350 to 362 (EVKKTETVVEEPA). Residues 363–372 (KTQPKPAPAA) show a composition bias toward low complexity.

It belongs to the MIP/aquaporin (TC 1.A.8) family.

It localises to the membrane. The enzyme catalyses H2O(in) = H2O(out). Its function is as follows. Water channel required to facilitate the transport of water across membranes. May play a role in the vegetative growth. The polypeptide is Aquaporin-5 (Botryotinia fuckeliana (strain B05.10) (Noble rot fungus)).